Consider the following 622-residue polypeptide: Probable methionine--tRNA ligase, mitochondrial (622 aa).

A 'HIGH' region motif is present at residues 67–79 (PIFYVNASPHVGH). The 'KMSKS' region motif lies at 366-370 (KMSKS). Lys369 contributes to the ATP binding site. Residues 592-622 (LDDIKGMGPDAGSKKHSSGNKPSSGNKKPTA) are disordered. Positions 610–622 (GNKPSSGNKKPTA) are enriched in low complexity.

This sequence belongs to the class-I aminoacyl-tRNA synthetase family.

It localises to the mitochondrion matrix. The catalysed reaction is tRNA(Met) + L-methionine + ATP = L-methionyl-tRNA(Met) + AMP + diphosphate. The polypeptide is Probable methionine--tRNA ligase, mitochondrial (Neurospora crassa (strain ATCC 24698 / 74-OR23-1A / CBS 708.71 / DSM 1257 / FGSC 987)).